Reading from the N-terminus, the 201-residue chain is IMP cyclohydrolase (201 aa).

It belongs to the archaeal IMP cyclohydrolase family.

It carries out the reaction IMP + H2O = 5-formamido-1-(5-phospho-D-ribosyl)imidazole-4-carboxamide. It participates in purine metabolism; IMP biosynthesis via de novo pathway; IMP from 5-formamido-1-(5-phospho-D-ribosyl)imidazole-4-carboxamide: step 1/1. Catalyzes the cyclization of 5-formylamidoimidazole-4-carboxamide ribonucleotide to IMP. The sequence is that of IMP cyclohydrolase from Methanocella arvoryzae (strain DSM 22066 / NBRC 105507 / MRE50).